The primary structure comprises 230 residues: MVKLVFARHGESEWNKANLFTGWADVDLSEKGTQQAIDAGKLIKEAGIEFDQAYTSVLKRAIKTTNLALEAADQLWVPVEKSWRLNERHYGGLTGKNKAEAAEQFGDEQVHIWRRSYDVLPPAMPHDDEYSAHTDRRYASLDDSVIPDAENLKVTLERALPFWEDKIAPALKDGKNVFVGAHGNSIRALVKHIKHLSDDEIMGVEIPNFPPLVFEFDEKLNVVKEYYLGK.

Substrate contacts are provided by residues 8–15 (RHGESEWN), 21–22 (TG), Arg-60, 87–90 (ERHY), Lys-98, 114–115 (RR), and 183–184 (GN). His-9 (tele-phosphohistidine intermediate) is an active-site residue. The active-site Proton donor/acceptor is the Glu-87.

This sequence belongs to the phosphoglycerate mutase family. BPG-dependent PGAM subfamily.

The enzyme catalyses (2R)-2-phosphoglycerate = (2R)-3-phosphoglycerate. Its pathway is carbohydrate degradation; glycolysis; pyruvate from D-glyceraldehyde 3-phosphate: step 3/5. Functionally, catalyzes the interconversion of 2-phosphoglycerate and 3-phosphoglycerate. The protein is 2,3-bisphosphoglycerate-dependent phosphoglycerate mutase of Streptococcus gordonii (strain Challis / ATCC 35105 / BCRC 15272 / CH1 / DL1 / V288).